A 684-amino-acid chain; its full sequence is DNA gyrase subunit B, novobiocin-sensitive (684 aa).

Residues 1–22 (MADSGNPNENTPSVATGENGEV) form a disordered region. The segment at 154 to 302 (VKTDGYRWTQ…RMLSVEIAMQ (149 aa)) is novobiocin-binding. In terms of domain architecture, Toprim spans 463–577 (CEIFIVEGDS…AGHVYLSRPP (115 aa)). Mg(2+)-binding residues include E469, D542, and D544.

Belongs to the type II topoisomerase GyrB family. Heterotetramer, composed of two GyrA and two GyrB chains. In the heterotetramer, GyrA contains the active site tyrosine that forms a transient covalent intermediate with DNA, while GyrB binds cofactors and catalyzes ATP hydrolysis. Mg(2+) serves as cofactor. Mn(2+) is required as a cofactor. Requires Ca(2+) as cofactor.

The protein resides in the cytoplasm. The catalysed reaction is ATP-dependent breakage, passage and rejoining of double-stranded DNA.. Functionally, a type II topoisomerase that negatively supercoils closed circular double-stranded (ds) DNA in an ATP-dependent manner to modulate DNA topology and maintain chromosomes in an underwound state. Negative supercoiling favors strand separation, and DNA replication, transcription, recombination and repair, all of which involve strand separation. Also able to catalyze the interconversion of other topological isomers of dsDNA rings, including catenanes and knotted rings. Type II topoisomerases break and join 2 DNA strands simultaneously in an ATP-dependent manner. The polypeptide is DNA gyrase subunit B, novobiocin-sensitive (Streptomyces niveus (Streptomyces spheroides)).